Reading from the N-terminus, the 348-residue chain is Protein RecA (348 aa).

An ATP-binding site is contributed by 66–73 (GPESSGKT).

This sequence belongs to the RecA family.

It is found in the cytoplasm. In terms of biological role, can catalyze the hydrolysis of ATP in the presence of single-stranded DNA, the ATP-dependent uptake of single-stranded DNA by duplex DNA, and the ATP-dependent hybridization of homologous single-stranded DNAs. It interacts with LexA causing its activation and leading to its autocatalytic cleavage. The chain is Protein RecA from Neisseria meningitidis serogroup A / serotype 4A (strain DSM 15465 / Z2491).